Consider the following 158-residue polypeptide: Small ribosomal subunit protein uS15 (158 aa).

Residues M1 to P18 are compositionally biased toward basic residues. The interval M1–A21 is disordered.

It belongs to the universal ribosomal protein uS15 family. In terms of assembly, part of the 30S ribosomal subunit.

The sequence is that of Small ribosomal subunit protein uS15 from Pyrococcus horikoshii (strain ATCC 700860 / DSM 12428 / JCM 9974 / NBRC 100139 / OT-3).